A 171-amino-acid chain; its full sequence is Large ribosomal subunit protein bL17 (171 aa).

The segment covering 140–152 (KREIQTKAREEKR) has biased composition (basic and acidic residues). Positions 140–171 (KREIQTKAREEKRATRKSNSAPVSKETTSKKK) are disordered. Polar residues predominate over residues 156–165 (KSNSAPVSKE).

Belongs to the bacterial ribosomal protein bL17 family. In terms of assembly, part of the 50S ribosomal subunit. Contacts protein L32.

This is Large ribosomal subunit protein bL17 from Leptospira interrogans serogroup Icterohaemorrhagiae serovar copenhageni (strain Fiocruz L1-130).